Consider the following 336-residue polypeptide: Aspartate carbamoyltransferase catalytic subunit (336 aa).

Positions 71 and 72 each coordinate carbamoyl phosphate. Lys99 contacts L-aspartate. Positions 121, 151, and 154 each coordinate carbamoyl phosphate. L-aspartate contacts are provided by Arg184 and Arg239. The carbamoyl phosphate site is built by Gly280 and Pro281.

The protein belongs to the aspartate/ornithine carbamoyltransferase superfamily. ATCase family. Heterododecamer (2C3:3R2) of six catalytic PyrB chains organized as two trimers (C3), and six regulatory PyrI chains organized as three dimers (R2).

It catalyses the reaction carbamoyl phosphate + L-aspartate = N-carbamoyl-L-aspartate + phosphate + H(+). It functions in the pathway pyrimidine metabolism; UMP biosynthesis via de novo pathway; (S)-dihydroorotate from bicarbonate: step 2/3. Its function is as follows. Catalyzes the condensation of carbamoyl phosphate and aspartate to form carbamoyl aspartate and inorganic phosphate, the committed step in the de novo pyrimidine nucleotide biosynthesis pathway. The polypeptide is Aspartate carbamoyltransferase catalytic subunit (Azotobacter vinelandii (strain DJ / ATCC BAA-1303)).